Consider the following 471-residue polypeptide: 5-hydroxytryptamine receptor 2A (471 aa).

Residues 1 to 80 (MEILCEDNIS…LQEKNWSALL (80 aa)) lie on the Extracellular side of the membrane. N8, N38, N44, N51, and N54 each carry an N-linked (GlcNAc...) asparagine glycan. Residues 81–97 (TTVVIILTIAGNILVIM) traverse the membrane as a helical segment. Topologically, residues 98–111 (AVSLEKKLQNATNY) are cytoplasmic. A helical membrane pass occupies residues 112 to 137 (FLMSLAIADMLLGFLVMPVSMLTILY). Over 138 to 146 (GYRWPLPSK) the chain is Extracellular. The chain crosses the membrane as a helical span at residues 147–171 (LCAIWIYLDVLFSTASIMHLCAISL). A disulfide bond links C148 and C227. D155 provides a ligand contact to serotonin. Residues 172 to 174 (DRY) carry the DRY motif; important for ligand-induced conformation changes motif. Over 172-191 (DRYVAIQNPIHHSRFNSRTK) the chain is Cytoplasmic. A helical transmembrane segment spans residues 192–215 (AFLKIIAVWTISVGISMPIPVFGL). Residues 216 to 232 (QDDSKVFKEGSCLLADD) lie on the Extracellular side of the membrane. The chain crosses the membrane as a helical span at residues 233–258 (NFVLIGSFVAFFIPLTIMVITYFLTI). Over 259-322 (KSLQKEATLC…QSISNEQKAC (64 aa)) the chain is Cytoplasmic. Phosphoserine is present on S280. The chain crosses the membrane as a helical span at residues 323–348 (KVLGIVFFLFVVMWCPFFITNIMAVI). Residue N343 coordinates serotonin. Cysteines 349 and 353 form a disulfide. The Extracellular portion of the chain corresponds to 349–356 (CKESCNEN). Residues 357-382 (VIGALLNVFVWIGYLSSAVNPLVYTL) form a helical membrane-spanning segment. An NPxxY motif; important for ligand-induced conformation changes and signaling motif is present at residues 376-380 (NPLVY). Topologically, residues 383–471 (FNKTYRSAFS…ETVNEKVSCV (89 aa)) are cytoplasmic. Positions 469–471 (SCV) match the PDZ-binding motif.

It belongs to the G-protein coupled receptor 1 family. As to quaternary structure, interacts (via C-terminus) with MPDZ and PATJ. May interact (via C-terminus) with MPP3, PRDX6, DLG4, DLG1, CASK, APBA1 and MAGI2. Interacts with GRM2 and DRD2; this may affect signaling. Detected in adult intestine, especially in mucosal epithelium, longitudinal and circular layers of muscularis externa and myenteric plexuses. Highly expressed in Paneth cells, and detected at lower levels in enterocytes (at protein level). Detected in brain cortex.

The protein localises to the cell membrane. It localises to the cell projection. The protein resides in the axon. Its subcellular location is the cytoplasmic vesicle. It is found in the membrane. The protein localises to the caveola. It localises to the dendrite. The protein resides in the presynapse. With respect to regulation, G-protein coupled receptor activity is regulated by lipids: oleamide increases HTR2A-mediated activity. G-protein coupled receptor for 5-hydroxytryptamine (serotonin). Also functions as a receptor for various drugs and psychoactive substances, including mescaline, psilocybin, 1-(2,5-dimethoxy-4-iodophenyl)-2-aminopropane (DOI) and lysergic acid diethylamide (LSD). Ligand binding causes a conformation change that triggers signaling via guanine nucleotide-binding proteins (G proteins) and modulates the activity of downstream effectors. HTR2A is coupled to G(q)/G(11) G alpha proteins and activates phospholipase C-beta, releasing diacylglycerol (DAG) and inositol 1,4,5-trisphosphate (IP3) second messengers that modulate the activity of phosphatidylinositol 3-kinase and promote the release of Ca(2+) ions from intracellular stores, respectively. Beta-arrestin family members inhibit signaling via G proteins and mediate activation of alternative signaling pathways. Affects neural activity, perception, cognition and mood. Plays a role in the regulation of behavior, including responses to anxiogenic situations and psychoactive substances. Plays a role in intestinal smooth muscle contraction, and may play a role in arterial vasoconstriction. The sequence is that of 5-hydroxytryptamine receptor 2A (Htr2a) from Rattus norvegicus (Rat).